A 363-amino-acid polypeptide reads, in one-letter code: UDP-N-acetylglucosamine--N-acetylmuramyl-(pentapeptide) pyrophosphoryl-undecaprenol N-acetylglucosamine transferase (363 aa).

UDP-N-acetyl-alpha-D-glucosamine-binding positions include 13–15 (TGG), Asn125, Arg166, Ser195, Ile249, 268–273 (ALTVSE), and Gln294.

Belongs to the glycosyltransferase 28 family. MurG subfamily.

Its subcellular location is the cell inner membrane. The catalysed reaction is di-trans,octa-cis-undecaprenyl diphospho-N-acetyl-alpha-D-muramoyl-L-alanyl-D-glutamyl-meso-2,6-diaminopimeloyl-D-alanyl-D-alanine + UDP-N-acetyl-alpha-D-glucosamine = di-trans,octa-cis-undecaprenyl diphospho-[N-acetyl-alpha-D-glucosaminyl-(1-&gt;4)]-N-acetyl-alpha-D-muramoyl-L-alanyl-D-glutamyl-meso-2,6-diaminopimeloyl-D-alanyl-D-alanine + UDP + H(+). Its pathway is cell wall biogenesis; peptidoglycan biosynthesis. Functionally, cell wall formation. Catalyzes the transfer of a GlcNAc subunit on undecaprenyl-pyrophosphoryl-MurNAc-pentapeptide (lipid intermediate I) to form undecaprenyl-pyrophosphoryl-MurNAc-(pentapeptide)GlcNAc (lipid intermediate II). The protein is UDP-N-acetylglucosamine--N-acetylmuramyl-(pentapeptide) pyrophosphoryl-undecaprenol N-acetylglucosamine transferase of Cellvibrio japonicus (strain Ueda107) (Pseudomonas fluorescens subsp. cellulosa).